Reading from the N-terminus, the 100-residue chain is Small ribosomal subunit protein uS14c (100 aa).

It belongs to the universal ribosomal protein uS14 family. Part of the 30S ribosomal subunit.

It is found in the plastid. Its subcellular location is the chloroplast. Functionally, binds 16S rRNA, required for the assembly of 30S particles. The sequence is that of Small ribosomal subunit protein uS14c from Euglena gracilis.